The following is a 206-amino-acid chain: Urease accessory protein UreG (206 aa).

Residue 14–21 (GPVGSGKT) participates in GTP binding.

The protein belongs to the SIMIBI class G3E GTPase family. UreG subfamily. Homodimer. UreD, UreF and UreG form a complex that acts as a GTP-hydrolysis-dependent molecular chaperone, activating the urease apoprotein by helping to assemble the nickel containing metallocenter of UreC. The UreE protein probably delivers the nickel.

The protein localises to the cytoplasm. In terms of biological role, facilitates the functional incorporation of the urease nickel metallocenter. This process requires GTP hydrolysis, probably effectuated by UreG. The polypeptide is Urease accessory protein UreG (Aliivibrio fischeri (strain ATCC 700601 / ES114) (Vibrio fischeri)).